The primary structure comprises 171 residues: Transcription factor E (171 aa).

The HTH TFE/IIEalpha-type domain maps to 1 to 81 (MLNLAKELVG…YWKVNVNQIN (81 aa)).

This sequence belongs to the TFE family. Monomer. Interaction with RNA polymerase subunits RpoF and RpoE is necessary for Tfe stimulatory transcription activity. Able to interact with Tbp and RNA polymerase in the absence of DNA promoter. Interacts both with the preinitiation and elongation complexes.

In terms of biological role, transcription factor that plays a role in the activation of archaeal genes transcribed by RNA polymerase. Facilitates transcription initiation by enhancing TATA-box recognition by TATA-box-binding protein (Tbp), and transcription factor B (Tfb) and RNA polymerase recruitment. Not absolutely required for transcription in vitro, but particularly important in cases where Tbp or Tfb function is not optimal. It dynamically alters the nucleic acid-binding properties of RNA polymerases by stabilizing the initiation complex and destabilizing elongation complexes. Seems to translocate with the RNA polymerase following initiation and acts by binding to the non template strand of the transcription bubble in elongation complexes. The chain is Transcription factor E from Sulfolobus acidocaldarius (strain ATCC 33909 / DSM 639 / JCM 8929 / NBRC 15157 / NCIMB 11770).